Consider the following 226-residue polypeptide: ATP-dependent dethiobiotin synthetase BioD (226 aa).

Residue aspartate 13–leucine 18 participates in ATP binding. Position 17 (threonine 17) interacts with Mg(2+). Residue lysine 38 is part of the active site. ATP-binding positions include aspartate 55, glutamate 117–glycine 120, asparagine 177–arginine 178, proline 206–valine 208, and glutamate 213. The Mg(2+) site is built by aspartate 55 and glutamate 117.

It belongs to the dethiobiotin synthetase family. In terms of assembly, homodimer. It depends on Mg(2+) as a cofactor.

It localises to the cytoplasm. The enzyme catalyses (7R,8S)-7,8-diammoniononanoate + CO2 + ATP = (4R,5S)-dethiobiotin + ADP + phosphate + 3 H(+). It participates in cofactor biosynthesis; biotin biosynthesis; biotin from 7,8-diaminononanoate: step 1/2. Its function is as follows. Catalyzes a mechanistically unusual reaction, the ATP-dependent insertion of CO2 between the N7 and N8 nitrogen atoms of 7,8-diaminopelargonic acid (DAPA, also called 7,8-diammoniononanoate) to form a ureido ring. The protein is ATP-dependent dethiobiotin synthetase BioD of Aeromonas salmonicida (strain A449).